The chain runs to 75 residues: UPF0270 protein PSPPH_1506 (75 aa).

The protein belongs to the UPF0270 family.

The polypeptide is UPF0270 protein PSPPH_1506 (Pseudomonas savastanoi pv. phaseolicola (strain 1448A / Race 6) (Pseudomonas syringae pv. phaseolicola (strain 1448A / Race 6))).